The primary structure comprises 434 residues: Ribosomal protein uS12 methylthiotransferase RimO (434 aa).

Positions 4–122 (NRVDVITLGC…LISHLGKSYY (119 aa)) constitute an MTTase N-terminal domain. The [4Fe-4S] cluster site is built by cysteine 13, cysteine 51, cysteine 85, cysteine 146, cysteine 150, and cysteine 153. The region spanning 132-363 (TTPRHYAYLK…MAVQERISAA (232 aa)) is the Radical SAM core domain. One can recognise a TRAM domain in the interval 366-434 (EAKIGSRLRV…PFDLYARIVD (69 aa)).

The protein belongs to the methylthiotransferase family. RimO subfamily. [4Fe-4S] cluster serves as cofactor.

The protein localises to the cytoplasm. The catalysed reaction is L-aspartate(89)-[ribosomal protein uS12]-hydrogen + (sulfur carrier)-SH + AH2 + 2 S-adenosyl-L-methionine = 3-methylsulfanyl-L-aspartate(89)-[ribosomal protein uS12]-hydrogen + (sulfur carrier)-H + 5'-deoxyadenosine + L-methionine + A + S-adenosyl-L-homocysteine + 2 H(+). Catalyzes the methylthiolation of an aspartic acid residue of ribosomal protein uS12. In Porphyromonas gingivalis (strain ATCC 33277 / DSM 20709 / CIP 103683 / JCM 12257 / NCTC 11834 / 2561), this protein is Ribosomal protein uS12 methylthiotransferase RimO.